A 123-amino-acid chain; its full sequence is Plasminogen (123 aa).

The Kringle domain maps to 40-118; the sequence is DCYHGNGQSY…RWEFCNLKKC (79 aa). Cystine bridges form between Cys-41-Cys-118, Cys-62-Cys-101, and Cys-90-Cys-113.

It belongs to the peptidase S1 family. Plasminogen subfamily. Interacts with CSPG4 and AMOT. Interacts (via the Kringle domains) with HRG; the interaction tethers PLG to the cell surface and enhances its activation. Interacts (via Kringle 4 domain) with ADA; the interaction stimulates PLG activation when in complex with DPP4. Angiostatin: Interacts with ATP5F1A; the interaction inhibits most of the angiogenic effects of angiostatin.

It is found in the secreted. The enzyme catalyses Preferential cleavage: Lys-|-Xaa &gt; Arg-|-Xaa, higher selectivity than trypsin. Converts fibrin into soluble products.. Converted into plasmin by plasminogen activators, both plasminogen and its activator being bound to fibrin. Cannot be activated with streptokinase. Functionally, plasmin dissolves the fibrin of blood clots and acts as a proteolytic factor in a variety of other processes including embryonic development, tissue remodeling, tumor invasion, and inflammation. In ovulation, weakens the walls of the Graafian follicle. It activates the urokinase-type plasminogen activator, collagenases and several complement zymogens, such as C1, C4 and C5. Cleavage of fibronectin and laminin leads to cell detachment and apoptosis. Also cleaves fibrin, thrombospondin and von Willebrand factor. Its role in tissue remodeling and tumor invasion may be modulated by CSPG4. Binds to cells. The protein is Plasminogen (PLG) of Capra hircus (Goat).